Reading from the N-terminus, the 230-residue chain is uncharacterized protein (230 aa).

A helical transmembrane segment spans residues 7–23 (LFTASILSLGYLVFICG). The disordered stretch occupies residues 27–230 (KPKPTASTES…VKTEGTLKKN (204 aa)). A compositionally biased stretch (low complexity) spans 50–59 (AVPQKPAAPA). The segment covering 60–83 (AEEKAPVDPKDPKSKDVDEAKKPD) has biased composition (basic and acidic residues). Residues 101-112 (KKSKKSEKSKKK) are compositionally biased toward basic residues. Positions 113-173 (KTEEKVMSED…KEKSKDETVP (61 aa)) are enriched in basic and acidic residues. Acidic residues predominate over residues 199-210 (ETDEFPTIDEDA). The span at 211 to 230 (EKTKKTEKKDVKTEGTLKKN) shows a compositional bias: basic and acidic residues.

It localises to the membrane. This is an uncharacterized protein from Caenorhabditis elegans.